Here is a 1149-residue protein sequence, read N- to C-terminus: Probable phospholipid-transporting ATPase IA (1149 aa).

Residues 1-65 lie on the Cytoplasmic side of the membrane; the sequence is MPTMRRTVSE…TAKYNIITFL (65 aa). At Ser-25 the chain carries Phosphoserine. Phosphothreonine is present on Thr-28. Ser-29 carries the post-translational modification Phosphoserine. The helical transmembrane segment at 66-86 threads the bilayer; it reads PRFLYSQFRRAANSFFLFIAL. Over 87 to 92 the chain is Extracellular; that stretch reads LQQIPD. Residues 93 to 115 traverse the membrane as a helical segment; the sequence is VSPTGRYTTLVPLLFILAVAAIK. Topologically, residues 116–297 are cytoplasmic; it reads EIIEDIKRHK…SNVERITNVQ (182 aa). A helical membrane pass occupies residues 298–319; sequence ILILFCILIAMSLVCSVGSAIW. Residues 320–344 lie on the Extracellular side of the membrane; sequence NRRHSGRDWYLNLNYGGANNFGLNF. Residues 345-366 traverse the membrane as a helical segment; the sequence is LTFIILFNNLIPISLLVTLEVV. At 367–842 the chain is on the cytoplasmic side; sequence KFTQAYFINW…GAWNYNRGSK (476 aa). Residue Asp-409 is the 4-aspartylphosphate intermediate of the active site. Residues Asp-409, Lys-410, Thr-411, Glu-493, Phe-534, Lys-557, Arg-590, Thr-670, Gly-671, Asp-672, 726–733, Arg-760, and Lys-766 contribute to the ATP site; that span reads ALIIDGKT. Asp-409 contacts Mg(2+). Thr-411 lines the Mg(2+) pocket. Position 786 (Asp-786) interacts with Mg(2+). ATP contacts are provided by Asn-789 and Asp-790. Asp-790 contributes to the Mg(2+) binding site. A helical membrane pass occupies residues 843–863; sequence CILYCFYKNIVLYIIEIWFAF. Residues 864-875 lie on the Extracellular side of the membrane; sequence VNGFSGQILFER. Residues 876–895 traverse the membrane as a helical segment; it reads WCIGLYNVMFTAMPPLTLGI. Residues 896 to 925 are Cytoplasmic-facing; it reads FERSCRKEYMLKYPELYKTSQNALDFNTKV. The helical transmembrane segment at 926-947 threads the bilayer; sequence FWVHCLNGLFHSVILFWFPLKA. Residues 948-961 lie on the Extracellular side of the membrane; the sequence is LQYGTVFENGRTSD. Residues 962–984 traverse the membrane as a helical segment; the sequence is YLLLGNFVYTFVVITVCLKAGLE. Residues 985–990 lie on the Cytoplasmic side of the membrane; the sequence is TSYWTW. A helical transmembrane segment spans residues 991–1011; that stretch reads FSHIAIWGSIALWVVFFGIYS. At 1012–1029 the chain is on the extracellular side; the sequence is SLWPAVPMAPDMSGEAAM. Residues 1030–1055 form a helical membrane-spanning segment; the sequence is LFSSGVFWMGLLFIPVASLLLDVVYK. The Cytoplasmic segment spans residues 1056–1149; the sequence is VIKRTAFKTL…DTTKQRPDEW (94 aa). 1080–1087 lines the ATP pocket; sequence GAVVLGKS. Ser-1111 is modified (phosphoserine).

Belongs to the cation transport ATPase (P-type) (TC 3.A.3) family. Type IV subfamily. Component of a P4-ATPase flippase complex which consists of a catalytic alpha subunit and an accessory beta subunit. Interacts with TMEM30A to form a flippase complex; this complex forms an intermediate phosphoenzyme. Interacts with TMEM30B; this interaction is reported conflictingly. Requires Mg(2+) as cofactor. Cleaved by calpain in a caspase- and calcium influx-dependent manner during platelet apoptosis leading to a 100 kDa polypeptide. As to expression, kidney.

The protein resides in the cytoplasmic vesicle. Its subcellular location is the secretory vesicle. It localises to the chromaffin granule membrane. The protein localises to the cytoplasmic granule. It is found in the cell membrane. The protein resides in the endoplasmic reticulum. Its subcellular location is the golgi apparatus. It carries out the reaction ATP + H2O + phospholipidSide 1 = ADP + phosphate + phospholipidSide 2.. It catalyses the reaction a 1,2-diacyl-sn-glycero-3-phospho-L-serine(out) + ATP + H2O = a 1,2-diacyl-sn-glycero-3-phospho-L-serine(in) + ADP + phosphate + H(+). Catalytic component of a P4-ATPase flippase complex which catalyzes the hydrolysis of ATP coupled to the transport of aminophospholipids from the outer to the inner leaflet of various membranes and ensures the maintenance of asymmetric distribution of phospholipids. Phospholipid translocation also seems to be implicated in vesicle formation and in uptake of lipid signaling molecules. In vitro, its ATPase activity is selectively and stereospecifically stimulated by phosphatidylserine (PS). The flippase complex ATP8A1:TMEM30A seems to play a role in regulation of cell migration probably involving flippase-mediated translocation of phosphatidylethanolamine (PE) at the cell membrane. Acts as aminophospholipid translocase at the cell membrane in neuronal cells. This Bos taurus (Bovine) protein is Probable phospholipid-transporting ATPase IA.